Consider the following 638-residue polypeptide: Epithelial sodium channel subunit delta (638 aa).

Basic and acidic residues predominate over residues 1 to 13; it reads MAEHRSMDGRMEA. The interval 1–47 is disordered; it reads MAEHRSMDGRMEAATRGGSHLQAAAQTPPRPGPPSAPPPPPKEGHQE. At 1-86 the chain is on the cytoplasmic side; the sequence is MAEHRSMDGR…CSRGNRLKTT (86 aa). Residues 28–41 are compositionally biased toward pro residues; the sequence is PPRPGPPSAPPPPP. Residues 87–107 form a helical membrane-spanning segment; it reads SWGLLSLGALVALCWQLGLLF. Residues 108–530 lie on the Extracellular side of the membrane; the sequence is ERHWHRPVLM…VPQLLSAMGS (423 aa). N166 and N384 each carry an N-linked (GlcNAc...) asparagine glycan. The chain crosses the membrane as a helical span at residues 531 to 551; sequence LCSLWFGASVLSLLELLELLL. Residues 552–638 are Cytoplasmic-facing; the sequence is DASALTLVLG…GPQPLETLDT (87 aa). Residues 574–613 are disordered; the sequence is RASPASGASSIKPEASQMPTPAGGTSDDPEPSGPHLPRVM.

Belongs to the amiloride-sensitive sodium channel (TC 1.A.6) family. SCNN1D subfamily. As to quaternary structure, can form an alternative heterotrimeric epithelial sodium channel (ENaC), composed of a delta (SCNN1D), beta (SCNN1B), and gamma (SCNN1G) subunit, where the delta (SCNN1D) subunit replaces the alpha (SCNN1A) subunit.

Its subcellular location is the apical cell membrane. The enzyme catalyses Na(+)(in) = Na(+)(out). Its activity is regulated as follows. Originally identified and characterized by its inhibition by the diuretic drug amiloride. Its function is as follows. Potential alternative pore-forming subunit of the epithelial sodium channel (ENaC), capable of replacing the alpha/SCNN1A subunit, creating a more active channel with distinct properties. ENaC functions in epithelial tissues, where it facilitates the electrodiffusion of sodium ions from the extracellular fluid through the apical membrane of cells, with water following osmotically, regulating sodium balance and fluid homeostasis. This subunit could also function independently as a sodium channel or assemble into other tissue-specific heterotrimeric sodium channels. This Pan troglodytes (Chimpanzee) protein is Epithelial sodium channel subunit delta.